The following is a 710-amino-acid chain: Polyribonucleotide nucleotidyltransferase (710 aa).

Residues D491 and D497 each contribute to the Mg(2+) site. The 61-residue stretch at P558 to I618 folds into the KH domain. One can recognise an S1 motif domain in the interval G628 to K696.

Belongs to the polyribonucleotide nucleotidyltransferase family. Mg(2+) is required as a cofactor.

It localises to the cytoplasm. It catalyses the reaction RNA(n+1) + phosphate = RNA(n) + a ribonucleoside 5'-diphosphate. Involved in mRNA degradation. Catalyzes the phosphorolysis of single-stranded polyribonucleotides processively in the 3'- to 5'-direction. This is Polyribonucleotide nucleotidyltransferase from Thermodesulfovibrio yellowstonii (strain ATCC 51303 / DSM 11347 / YP87).